Reading from the N-terminus, the 556-residue chain is Oxygen-dependent choline dehydrogenase (556 aa).

Residue Asp4–Glu33 participates in FAD binding. His473 serves as the catalytic Proton acceptor.

It belongs to the GMC oxidoreductase family. FAD serves as cofactor.

The catalysed reaction is choline + A = betaine aldehyde + AH2. The enzyme catalyses betaine aldehyde + NAD(+) + H2O = glycine betaine + NADH + 2 H(+). It functions in the pathway amine and polyamine biosynthesis; betaine biosynthesis via choline pathway; betaine aldehyde from choline (cytochrome c reductase route): step 1/1. Its function is as follows. Involved in the biosynthesis of the osmoprotectant glycine betaine. Catalyzes the oxidation of choline to betaine aldehyde and betaine aldehyde to glycine betaine at the same rate. This Escherichia coli (strain K12 / DH10B) protein is Oxygen-dependent choline dehydrogenase.